A 322-amino-acid polypeptide reads, in one-letter code: Mas-related G-protein coupled receptor member X3 (322 aa).

The Extracellular portion of the chain corresponds to 1-31 (MDPTIPALGTSQTPINRREETPCYKQTLSLT). Residues 32 to 52 (VLTCIISLVGLTGNAVVLWLL) traverse the membrane as a helical segment. Residues 53–60 (GFRMRRNA) lie on the Cytoplasmic side of the membrane. Residues 61–81 (VSTYILNLAAVDFLFLSGHIV) traverse the membrane as a helical segment. The Extracellular portion of the chain corresponds to 82–96 (RSPLRLISIRHPISK). The chain crosses the membrane as a helical span at residues 97-117 (IVNPVMTFPYFIGLSMLSAIS). The Cytoplasmic portion of the chain corresponds to 118-139 (TERCLSVLWPMWYRCRRPRHLS). A helical transmembrane segment spans residues 140–160 (VVVCVLLWALSLLRSILEWMF). The Extracellular portion of the chain corresponds to 161–177 (CDFLFSGADSVWCETSD). Residues 178-198 (FITIAWLIFLCVVLCGSSLVL) traverse the membrane as a helical segment. Residues 199–213 (LVRILCGSRKMPLTR) are Cytoplasmic-facing. Residues 214–234 (LYVTILLTVLVFLLCGLPFGI) traverse the membrane as a helical segment. The Extracellular segment spans residues 235–254 (QWALFSRIHLDWKVLFCHVH). The chain crosses the membrane as a helical span at residues 255–275 (LISVFLSSLNSSANPIIYFFV). The Cytoplasmic segment spans residues 276–322 (GSFRQRQNRQNLKLVLQRALQDTPEVDEGGGRLPEETLELSVSRLEQ).

This sequence belongs to the G-protein coupled receptor 1 family. Mas subfamily.

It is found in the cell membrane. Functionally, orphan receptor. Probably involved in the function of nociceptive neurons. May regulate nociceptor function and/or development, including the sensation or modulation of pain. Potently activated by enkephalins. This Macaca mulatta (Rhesus macaque) protein is Mas-related G-protein coupled receptor member X3 (MRGPRX3).